The following is a 236-amino-acid chain: Phosphoribosylaminoimidazole-succinocarboxamide synthase (236 aa).

The protein belongs to the SAICAR synthetase family.

It carries out the reaction 5-amino-1-(5-phospho-D-ribosyl)imidazole-4-carboxylate + L-aspartate + ATP = (2S)-2-[5-amino-1-(5-phospho-beta-D-ribosyl)imidazole-4-carboxamido]succinate + ADP + phosphate + 2 H(+). The protein operates within purine metabolism; IMP biosynthesis via de novo pathway; 5-amino-1-(5-phospho-D-ribosyl)imidazole-4-carboxamide from 5-amino-1-(5-phospho-D-ribosyl)imidazole-4-carboxylate: step 1/2. This chain is Phosphoribosylaminoimidazole-succinocarboxamide synthase, found in Campylobacter jejuni subsp. doylei (strain ATCC BAA-1458 / RM4099 / 269.97).